Consider the following 521-residue polypeptide: Replicase polyprotein 1ab (521 aa).

The region spanning 1–58 (GGGGQSFLAADNAVLVSTQCYKRHSYVEIPSNLLVQNGMSLKDGANLYVYKRVNGAFV) is the AV-Nsp11N/CoV-Nsp15M domain. Residues 75–216 (EPRSDVERDF…EDGSIKTCYP (142 aa)) form the NendoU domain. Active-site residues include histidine 104, histidine 119, lysine 159, lysine 263, aspartate 347, lysine 391, and glutamate 424. Residues 219–518 (QSAWTCGYNM…NTSFTSDSFV (300 aa)) enclose the Nidovirus-type SAM-dependent 2'-O-MTase domain.

Its function is as follows. The replicase polyprotein of coronaviruses is a multifunctional protein: it contains the activities necessary for the transcription of negative stranded RNA, leader RNA, subgenomic mRNAs and progeny virion RNA as well as proteinases responsible for the cleavage of the polyprotein into functional products. NendoU is a Mn(2+)-dependent, uridylate-specific enzyme, which leaves 2'-3'-cyclic phosphates 5' to the cleaved bond. This is Replicase polyprotein 1ab (rep) from Gallus gallus (Chicken).